The following is a 1912-amino-acid chain: Receptor-type tyrosine-protein phosphatase delta (1912 aa).

The signal sequence occupies residues 1 to 20 (MVPVARPLSLLLTFFLCACA). Residues 21 to 1266 (ETPPRFTRTP…PQPITDEEEG (1246 aa)) are Extracellular-facing. Ig-like C2-type domains are found at residues 24–114 (PRFT…TRLT) and 126–224 (PTID…ANLY). Cystine bridges form between cysteine 45/cysteine 98 and cysteine 147/cysteine 207. The interval 181-189 (ESIGGTPIR) is mini-exon peptide A9; sufficient for interaction with IL1RAPL1. Residues 227–230 (ELRE) are mini-exon peptide B; required for interaction with SLITRK2 and in the function in pre-synaptic differentiation; Acts as an adjustable linker to control relative positions and orientations of the PTPRD second and third immunoglobilin domains for their simultaneous interactions with the first immunoglobilin domain of IL1RAPL1 and IL1RAP; Modulates affinity for IL1RAPL1 and IL1RAP. The Ig-like C2-type 3 domain occupies 236–318 (PRFSIPPTNH…GVIEAIAQIT (83 aa)). Residues asparagine 254 and asparagine 299 are each glycosylated (N-linked (GlcNAc...) asparagine). Cysteine 257 and cysteine 302 form a disulfide bridge. Fibronectin type-III domains follow at residues 325–415 (PPGT…TSEQ), 420–516 (APRD…TGVP), 518–607 (QPLN…TMQS), 612–709 (PPQD…TDED), 714–822 (PPRK…TTGA), 823–916 (VPGK…VPEE), 921–1016 (FPQN…TLPV), and 1020–1106 (FAKN…TAPD). Asparagine 724 and asparagine 832 each carry an N-linked (GlcNAc...) asparagine glycan. A helical transmembrane segment spans residues 1267 to 1287 (LIWVVGPVLAVVFIICIVIAI). Over 1288 to 1912 (LLYKRKRAES…YLGSFDHYAT (625 aa)) the chain is Cytoplasmic. Residues 1298-1319 (ESRKSSLPNSKEVPSHHPTDPV) form a disordered region. Residues 1310–1319 (VPSHHPTDPV) show a composition bias toward basic and acidic residues. Tyrosine-protein phosphatase domains follow at residues 1357–1612 (FSQE…LLEA) and 1644–1903 (MELE…ALEY). Substrate is bound by residues aspartate 1521, 1553-1559 (CSAGVGR), and glutamine 1597. Cysteine 1553 serves as the catalytic Phosphocysteine intermediate. The Phosphocysteine intermediate role is filled by cysteine 1844.

It belongs to the protein-tyrosine phosphatase family. Receptor class 2A subfamily. In terms of assembly, interacts with PPFIA1, PPFIA2 and PPFIA3. Interacts (via extracellular domain) with SLITRK4 (via LRR 1 and 2 repeats). Interacts with SLITRK2; induces presynaptic differentiation. Interacts (via the second immunoglobilin domain) with IL1RAPL1 (via the first immunoglobilin domain); induces pre- and postsynaptic differentiation of neurons and synapse formation. Isoform G, isoform H, isoform I, isoform J, and isoform K do not interact with IL1RAPL1. Interacts (via the third immunoglobilin domain) with IL1RAP (via the first immunoglobilin domain); induces pre- and postsynaptic differentiation of neurons. In terms of processing, a cleavage occurs, separating the extracellular domain from the transmembrane segment. This process called 'ectodomain shedding' is thought to be involved in receptor desensitization, signal transduction and/or membrane localization. As to expression, brain, kidney, heart, and some B-cell lines.

The protein resides in the membrane. It catalyses the reaction O-phospho-L-tyrosyl-[protein] + H2O = L-tyrosyl-[protein] + phosphate. Its function is as follows. Can bidirectionally induce pre- and post-synaptic differentiation of neurons by mediating interaction with IL1RAP and IL1RAPL1 trans-synaptically. Involved in pre-synaptic differentiation through interaction with SLITRK2. The chain is Receptor-type tyrosine-protein phosphatase delta (Ptprd) from Mus musculus (Mouse).